Reading from the N-terminus, the 627-residue chain is Myelin-associated glycoprotein (627 aa).

An N-terminal signal peptide occupies residues methionine 1–glycine 19. An interaction with RTN4R and RTN4RL2 region spans residues glycine 20–alanine 325. Residues glycine 20–proline 516 lie on the Extracellular side of the membrane. C-linked (Man) tryptophan glycosylation is present at tryptophan 22. The region spanning tryptophan 22–aspartate 120 is the Ig-like V-type domain. Cystine bridges form between cysteine 37–cysteine 165, cysteine 42–cysteine 100, and cysteine 159–cysteine 217. Residue tyrosine 65–lysine 67 participates in a ganglioside GT1b (d18:1(4E)) binding. The N-linked (GlcNAc...) asparagine glycan is linked to asparagine 99. Residues arginine 118 and tyrosine 124–threonine 128 contribute to the a ganglioside GT1b (d18:1(4E)) site. 4 consecutive Ig-like C2-type domains span residues asparagine 139–lysine 237, valine 241–alanine 325, tryptophan 327–alanine 412, and proline 413–arginine 508. N-linked (GlcNAc...) asparagine glycans are attached at residues asparagine 223 and asparagine 246. Cysteines 261 and 305 form a disulfide. 2 N-linked (GlcNAc...) asparagine glycosylation sites follow: asparagine 315 and asparagine 332. Residues cysteine 347 and cysteine 392 are joined by a disulfide bond. Asparagine 406 carries an N-linked (GlcNAc...) asparagine glycan. Cystine bridges form between cysteine 421–cysteine 430 and cysteine 432–cysteine 488. N-linked (GlcNAc...) asparagine glycosylation is found at asparagine 450 and asparagine 454. Residues valine 517–threonine 536 traverse the membrane as a helical segment. Cysteine 531 carries the S-palmitoyl cysteine lipid modification. Residues arginine 537–lysine 627 lie on the Cytoplasmic side of the membrane. Phosphoserine occurs at positions 545, 547, 549, and 591. The required for normal axon myelination in the central nervous system stretch occupies residues leucine 578 to lysine 627.

It belongs to the immunoglobulin superfamily. SIGLEC (sialic acid binding Ig-like lectin) family. In terms of assembly, monomer and homodimer. Interacts (via the first three N-terminal Ig-like domains) with RTN4R and RTN4RL2. Interacts with isoform 2 of BSG. N-glycosylated. In terms of processing, phosphorylated on tyrosine residues. Post-translationally, ubiquitinated, leading to proteasomal degradation. Detected in the myelin tract in brain, especially in the corpus callosum and in peripheral nerve. Expressed by myelinating glial cells in the central and peripheral nervous system. Detected in oligodendrocyte processes before formation of compact myelin. Restricted to the periaxonal space after myelination. Isoform S-MAG is the predominant isoform in CNS and PNS of the adult (at protein level).

The protein resides in the cell membrane. It localises to the membrane raft. Functionally, adhesion molecule that mediates interactions between myelinating cells and neurons by binding to neuronal sialic acid-containing gangliosides and to the glycoproteins RTN4R and RTN4RL2. Not required for initial myelination, but seems to play a role in the maintenance of normal axon myelination. Protects motoneurons against apoptosis, also after injury; protection against apoptosis is probably mediated via interaction with neuronal RTN4R and RTN4RL2. Required to prevent degeneration of myelinated axons in adults; this probably depends on binding to gangliosides on the axon cell membrane. Negative regulator of neurite outgrowth that inhibits axon longitudinal growth. Negative regulator of neurite outgrowth; in dorsal root ganglion neurons the inhibition is mediated primarily via binding to neuronal RTN4R or RTN4RL2 and to a lesser degree via binding to neuronal gangliosides. In cerebellar granule cells the inhibition is mediated via binding to neuronal gangliosides. In sensory neurons, inhibition of neurite extension depends only partially on RTN4R, RTN4RL2 and gangliosides. Inhibits axon outgrowth by binding to RTN4R. Preferentially binds to alpha-2,3-linked sialic acid. Binds ganglioside Gt1b. The sequence is that of Myelin-associated glycoprotein (Mag) from Mus musculus (Mouse).